Here is a 198-residue protein sequence, read N- to C-terminus: Na(+)-translocating NADH-quinone reductase subunit E (198 aa).

6 helical membrane-spanning segments follow: residues 11-31 (SIFI…FLAV), 39-59 (FGLG…NNLV), 77-97 (FLSF…LEMI), 110-130 (GIFL…SFMV), 140-160 (VVYG…LAGI), and 176-196 (LGIT…FSGV).

Belongs to the NqrDE/RnfAE family. As to quaternary structure, composed of six subunits; NqrA, NqrB, NqrC, NqrD, NqrE and NqrF.

It is found in the cell inner membrane. It carries out the reaction a ubiquinone + n Na(+)(in) + NADH + H(+) = a ubiquinol + n Na(+)(out) + NAD(+). Its function is as follows. NQR complex catalyzes the reduction of ubiquinone-1 to ubiquinol by two successive reactions, coupled with the transport of Na(+) ions from the cytoplasm to the periplasm. NqrA to NqrE are probably involved in the second step, the conversion of ubisemiquinone to ubiquinol. The sequence is that of Na(+)-translocating NADH-quinone reductase subunit E from Aliivibrio fischeri (strain ATCC 700601 / ES114) (Vibrio fischeri).